Here is a 310-residue protein sequence, read N- to C-terminus: Methionyl-tRNA formyltransferase (310 aa).

Position 114 to 117 (114 to 117 (SLLP)) interacts with (6S)-5,6,7,8-tetrahydrofolate.

It belongs to the Fmt family.

The catalysed reaction is L-methionyl-tRNA(fMet) + (6R)-10-formyltetrahydrofolate = N-formyl-L-methionyl-tRNA(fMet) + (6S)-5,6,7,8-tetrahydrofolate + H(+). In terms of biological role, attaches a formyl group to the free amino group of methionyl-tRNA(fMet). The formyl group appears to play a dual role in the initiator identity of N-formylmethionyl-tRNA by promoting its recognition by IF2 and preventing the misappropriation of this tRNA by the elongation apparatus. In Granulibacter bethesdensis (strain ATCC BAA-1260 / CGDNIH1), this protein is Methionyl-tRNA formyltransferase.